A 75-amino-acid polypeptide reads, in one-letter code: Protein Tlp homolog (75 aa).

The segment at 53–75 (REALDGMREEIKDEARDKKNGYM) is disordered.

The protein belongs to the Tlp family.

This chain is Protein Tlp homolog, found in Clostridium botulinum (strain ATCC 19397 / Type A).